The primary structure comprises 333 residues: Meiotic drive suppressor wtf9 (333 aa).

The tract at residues 1–69 (MKNNYTSLKS…ENHSSGTTDN (69 aa)) is disordered. Positions 19–30 (KTDHEIDLEKGP) are enriched in basic and acidic residues. The next 4 membrane-spanning stretches (helical) occupy residues 73–95 (LLIK…VCYL), 108–130 (VEWT…LTYF), 174–191 (WVVI…TLFL), and 204–226 (LICS…RLPF).

Belongs to the WTF family. In terms of assembly, homomer. Interacts with other proteins that exhibit high sequence similarity.

The protein resides in the spore membrane. It is found in the vacuole membrane. In terms of biological role, acts as a suppressor component of the dual wtf meiotic drive system, and can suppress but not confer meiotic drive by compatible poisons. Wtf meiotic drive systems promote unequal transmission of alleles from the parental zygote to progeny spores by encoding a poison and an antidote from the same locus; the poison is trans-acting and forms toxic aggregates in all spores within an ascus, wherease the antidote is spore-specific and targets aggregates for degradation by the vacuole. Meiotic drive by wtf systems therefore lead to poisoning of all progeny that do not inherit the dual poison/antidote allele, or express a compatible antidote. In Schizosaccharomyces pombe (strain 972 / ATCC 24843) (Fission yeast), this protein is Meiotic drive suppressor wtf9.